A 266-amino-acid polypeptide reads, in one-letter code: Uxu operon regulator (266 aa).

In terms of domain architecture, HTH gntR-type spans 23–91 (NRTYTRIGQL…KGSGVYVVRT (69 aa)). Residues 51–70 (EREISEKFGVSRTIVREAMV) constitute a DNA-binding region (H-T-H motif).

Functionally, repressor for the uxuRBA operon. The sequence is that of Uxu operon regulator (uxuR) from Haemophilus influenzae (strain ATCC 51907 / DSM 11121 / KW20 / Rd).